Consider the following 248-residue polypeptide: Ribonuclease PH (248 aa).

Phosphate contacts are provided by residues R86 and 124–126 (GTR).

This sequence belongs to the RNase PH family. Homohexameric ring arranged as a trimer of dimers.

The catalysed reaction is tRNA(n+1) + phosphate = tRNA(n) + a ribonucleoside 5'-diphosphate. Functionally, phosphorolytic 3'-5' exoribonuclease that plays an important role in tRNA 3'-end maturation. Removes nucleotide residues following the 3'-CCA terminus of tRNAs; can also add nucleotides to the ends of RNA molecules by using nucleoside diphosphates as substrates, but this may not be physiologically important. Probably plays a role in initiation of 16S rRNA degradation (leading to ribosome degradation) during starvation. This Clostridium perfringens (strain 13 / Type A) protein is Ribonuclease PH.